A 287-amino-acid chain; its full sequence is Ethanolamine ammonia-lyase small subunit (287 aa).

Adenosylcob(III)alamin contacts are provided by V168, E189, and C218.

It belongs to the EutC family. As to quaternary structure, the basic unit is a heterodimer which dimerizes to form tetramers. The heterotetramers trimerize; 6 large subunits form a core ring with 6 small subunits projecting outwards. Adenosylcob(III)alamin is required as a cofactor.

Its subcellular location is the bacterial microcompartment. It catalyses the reaction ethanolamine = acetaldehyde + NH4(+). It functions in the pathway amine and polyamine degradation; ethanolamine degradation. Its function is as follows. Catalyzes the deamination of various vicinal amino-alcohols to oxo compounds. Allows this organism to utilize ethanolamine as the sole source of nitrogen and carbon in the presence of external vitamin B12. This Pseudomonas syringae pv. tomato (strain ATCC BAA-871 / DC3000) protein is Ethanolamine ammonia-lyase small subunit.